A 366-amino-acid chain; its full sequence is Chorismate synthase (366 aa).

Residues R48 and R54 each coordinate NADP(+). Residues 125 to 127 (RSS), 238 to 239 (NA), G278, 293 to 297 (KPTSS), and R319 each bind FMN.

This sequence belongs to the chorismate synthase family. Homotetramer. FMNH2 is required as a cofactor.

It catalyses the reaction 5-O-(1-carboxyvinyl)-3-phosphoshikimate = chorismate + phosphate. Its pathway is metabolic intermediate biosynthesis; chorismate biosynthesis; chorismate from D-erythrose 4-phosphate and phosphoenolpyruvate: step 7/7. In terms of biological role, catalyzes the anti-1,4-elimination of the C-3 phosphate and the C-6 proR hydrogen from 5-enolpyruvylshikimate-3-phosphate (EPSP) to yield chorismate, which is the branch point compound that serves as the starting substrate for the three terminal pathways of aromatic amino acid biosynthesis. This reaction introduces a second double bond into the aromatic ring system. In Burkholderia ambifaria (strain MC40-6), this protein is Chorismate synthase.